Consider the following 201-residue polypeptide: MSFTGTQDKCTACDKTVHFIDLLTADGVPYHKTCFKCSHCKGILSMCSYSSMDGVLYCKTHFEQLFKETGSFSKKFAPGCRSTDKELARAPSKICSAFSGTQDKCAACQKTVYPLEKLTLEGESYHKSCFKCSHGGCILTTSSYAALNGVLYCKIHFGQLFMEKGSYNHMKKKSESQEVLPEVVPEEQPAPPPPDENREDN.

LIM zinc-binding domains lie at 8–68 (DKCT…LFKE) and 103–163 (DKCA…LFME). The disordered stretch occupies residues 171 to 201 (KKKSESQEVLPEVVPEEQPAPPPPDENREDN). The segment covering 177 to 187 (QEVLPEVVPEE) has biased composition (low complexity).

In terms of assembly, interacts with NEK3.

This is LIM domain-containing protein PLIM2b from Oryza sativa subsp. japonica (Rice).